A 95-amino-acid polypeptide reads, in one-letter code: Secretoglobin family 2A member 2 (95 aa).

The signal sequence occupies residues 1-18; it reads MKLVFLFLLVTIPICCYA. Asn35 carries an N-linked (GlcNAc...) asparagine glycan.

It belongs to the secretoglobin family. Lipophilin subfamily. Prostatein is composed of three different peptides called C1, C2 and C3. These form covalent C1:C3 (F) and C2:C3 (S) heterodimers whose non-covalent association forms tetrameric (C1:C3/C3:C2) prostatein molecules. As to expression, highly expressed in ventral prostate.

The protein resides in the secreted. Its function is as follows. Part of prostatein which is the major secretory glycoprotein of ventral prostate gland. Steroid-binding protein; can bind non-polar steroids, cholesterol and a group of small proline-rich peptides. The protein is Secretoglobin family 2A member 2 (Scgb2a2) of Rattus norvegicus (Rat).